The chain runs to 470 residues: Uronate isomerase (470 aa).

It belongs to the metallo-dependent hydrolases superfamily. Uronate isomerase family.

The enzyme catalyses D-glucuronate = D-fructuronate. It carries out the reaction aldehydo-D-galacturonate = keto-D-tagaturonate. The protein operates within carbohydrate metabolism; pentose and glucuronate interconversion. This Escherichia coli O17:K52:H18 (strain UMN026 / ExPEC) protein is Uronate isomerase.